We begin with the raw amino-acid sequence, 383 residues long: uncharacterized protein (383 aa).

This sequence belongs to the peptidase M20 family.

This is an uncharacterized protein from Staphylococcus haemolyticus (strain JCSC1435).